The following is a 290-amino-acid chain: Mitochondrial dicarboxylate carrier (290 aa).

Solcar repeat units follow at residues 6 to 90, 101 to 188, and 197 to 281; these read TKRL…VKKQ, QKAL…IKQT, and DNLQ…LRLK. 3 consecutive transmembrane segments (helical) span residues 12-32, 65-84, and 103-123; these read WYFGGVAGAMAACCTHPLDLL, GVSASVLRQLTYSTTRFGIY, and ALLAGFAGACGGMVGTPGDLV. K159 bears the N6-acetyllysine mark. 3 helical membrane passes run 163–182, 203–223, and 256–276; these read GATMATSRAILMTIGQLSFY, FASSISAASVATVMTQPLDVM, and GFIPAWARLAPHTVLTFIFFE.

The protein belongs to the mitochondrial carrier (TC 2.A.29) family.

The protein resides in the mitochondrion inner membrane. The catalysed reaction is (S)-malate(in) + phosphate(out) = (S)-malate(out) + phosphate(in). It carries out the reaction malonate(out) + (S)-malate(in) = malonate(in) + (S)-malate(out). The enzyme catalyses (S)-malate(in) + succinate(out) = (S)-malate(out) + succinate(in). It catalyses the reaction (S)-malate(in) + sulfate(out) = (S)-malate(out) + sulfate(in). The catalysed reaction is 2 thiosulfate(out) + (S)-malate(in) = 2 thiosulfate(in) + (S)-malate(out). It carries out the reaction malonate(out) + phosphate(in) = malonate(in) + phosphate(out). The enzyme catalyses succinate(out) + phosphate(in) = succinate(in) + phosphate(out). It catalyses the reaction sulfate(out) + phosphate(in) = sulfate(in) + phosphate(out). The catalysed reaction is 2 thiosulfate(out) + phosphate(in) = 2 thiosulfate(in) + phosphate(out). It carries out the reaction malonate(out) + succinate(in) = malonate(in) + succinate(out). Its function is as follows. Catalyzes the electroneutral exchange or flux of physiologically important metabolites such as dicarboxylates (malonate, malate, succinate), inorganic sulfur-containing anions, and phosphate, across mitochondrial inner membrane. Plays an important role in gluconeogenesis, fatty acid metabolism, urea synthesis, and sulfur metabolism, by supplying the substrates for the different metabolic processes. The protein is Mitochondrial dicarboxylate carrier of Caenorhabditis elegans.